Consider the following 845-residue polypeptide: Translation initiation factor IF-2 (845 aa).

Disordered regions lie at residues 44 to 91 (KRRK…NLSS) and 119 to 256 (ARRA…NQEP). Positions 119–129 (ARRAKEREESL) are enriched in basic and acidic residues. Positions 139 to 148 (DETPQEEEEP) are enriched in acidic residues. Positions 156-165 (SLSPAQSQIE) are enriched in polar residues. Composition is skewed to basic and acidic residues over residues 179–194 (IEKRKADETKEDDRNS) and 202–217 (SEVRAPKVLKGADEKR). Residues 343–510 (LRPPVVTIMG…AILLQAEILD (168 aa)) form the tr-type G domain. The G1 stretch occupies residues 352 to 359 (GHVDHGKT). A GTP-binding site is contributed by 352 to 359 (GHVDHGKT). A G2 region spans residues 377–381 (GITQH). A G3 region spans residues 398-401 (DTPG). Residues 398-402 (DTPGH) and 452-455 (NKID) each bind GTP. The segment at 452-455 (NKID) is G4. The segment at 488 to 490 (SAK) is G5.

The protein belongs to the TRAFAC class translation factor GTPase superfamily. Classic translation factor GTPase family. IF-2 subfamily.

The protein localises to the cytoplasm. In terms of biological role, one of the essential components for the initiation of protein synthesis. Protects formylmethionyl-tRNA from spontaneous hydrolysis and promotes its binding to the 30S ribosomal subunits. Also involved in the hydrolysis of GTP during the formation of the 70S ribosomal complex. The chain is Translation initiation factor IF-2 from Bartonella henselae (strain ATCC 49882 / DSM 28221 / CCUG 30454 / Houston 1) (Rochalimaea henselae).